We begin with the raw amino-acid sequence, 193 residues long: Thymidine kinase (193 aa).

ATP is bound by residues 16-23 (GPMFSGKS) and 89-92 (DEIQ). Catalysis depends on glutamate 90, which acts as the Proton acceptor. Residues cysteine 146, cysteine 149, cysteine 184, and cysteine 187 each contribute to the Zn(2+) site.

This sequence belongs to the thymidine kinase family. As to quaternary structure, homotetramer.

The protein localises to the cytoplasm. It catalyses the reaction thymidine + ATP = dTMP + ADP + H(+). This is Thymidine kinase from Thermoanaerobacter pseudethanolicus (strain ATCC 33223 / 39E) (Clostridium thermohydrosulfuricum).